We begin with the raw amino-acid sequence, 707 residues long: Protein kinase C-like 1B (707 aa).

In terms of domain architecture, C2 spans 1–114 (MLFTGTVRVR…KIGSANDIWV (114 aa)). 2 Phorbol-ester/DAG-type zinc fingers span residues 170-220 (GHKF…VWKC) and 248-298 (PHRF…ANNC). The interval 323 to 368 (SKKKPSIMTDTSTDISGSSNSENSGYLQQISEDDSGTTSSRSASKV) is disordered. A compositionally biased stretch (polar residues) spans 330–365 (MTDTSTDISGSSNSENSGYLQQISEDDSGTTSSRSA). The region spanning 378–638 (FTFMKVLGKG…EDAIRAHPFF (261 aa)) is the Protein kinase domain. ATP contacts are provided by residues 384–392 (LGKGSFGKV) and Lys-407. Asp-502 acts as the Proton acceptor in catalysis. Residues 639 to 707 (REIDWDALES…FSFINPHFTY (69 aa)) form the AGC-kinase C-terminal domain.

This sequence belongs to the protein kinase superfamily. AGC Ser/Thr protein kinase family. PKC subfamily. As to expression, expressed selectively in neurons that receive, transmit and process environmental signals.

It localises to the membrane. It is found in the cytoplasm. The protein localises to the cytoskeleton. The catalysed reaction is L-seryl-[protein] + ATP = O-phospho-L-seryl-[protein] + ADP + H(+). It carries out the reaction L-threonyl-[protein] + ATP = O-phospho-L-threonyl-[protein] + ADP + H(+). Its function is as follows. PKC is activated by diacylglycerol which in turn phosphorylates a range of cellular proteins. PKC also serves as the receptor for phorbol esters, a class of tumor promoters. Involved in neuropeptide secretion in motor axons. Likely to act via the extracellular signal-regulated kinase/mitogen-activated protein kinase (ERK/MAPK) pathway in the signaling response to various sensory neurons; temperature, odor, taste, and osmolality. Its role in regulation differs depending on the neuron in which it is acting; thermosensation in AFD neurons, osmolality in ASH neurons, olfactory perception in AWA and AWC neurons. Promotes dauer formation mediated by the insulin/IGF pathway. Required for resistance to antimitotic toxins. In Caenorhabditis elegans, this protein is Protein kinase C-like 1B.